The following is a 163-amino-acid chain: Peptidyl-prolyl cis-trans isomerase (163 aa).

The region spanning K17–L163 is the PPIase cyclophilin-type domain.

This sequence belongs to the cyclophilin-type PPIase family.

The enzyme catalyses [protein]-peptidylproline (omega=180) = [protein]-peptidylproline (omega=0). Functionally, PPIases accelerate the folding of proteins. It catalyzes the cis-trans isomerization of proline imidic peptide bonds in oligopeptides. The polypeptide is Peptidyl-prolyl cis-trans isomerase (ppiA) (Helicobacter pylori (strain ATCC 700392 / 26695) (Campylobacter pylori)).